The sequence spans 311 residues: Probable porphobilinogen deaminase (311 aa).

Cysteine 237 carries the S-(dipyrrolylmethanemethyl)cysteine modification. A disordered region spans residues 270 to 289 (SKTGDKNNPKSLGQSAGEEL).

Belongs to the HMBS family. It depends on dipyrromethane as a cofactor.

It catalyses the reaction 4 porphobilinogen + H2O = hydroxymethylbilane + 4 NH4(+). Its pathway is porphyrin-containing compound metabolism; protoporphyrin-IX biosynthesis; coproporphyrinogen-III from 5-aminolevulinate: step 2/4. Its function is as follows. Tetrapolymerization of the monopyrrole PBG into the hydroxymethylbilane pre-uroporphyrinogen in several discrete steps. This chain is Probable porphobilinogen deaminase, found in Nitrosopumilus maritimus (strain SCM1).